The primary structure comprises 22 residues: Chlorate reductase subunit gamma (22 aa).

Residues 1-22 (EXSEQNPNILEIKPGDTVKVXT) form a disordered region.

As to quaternary structure, heterotrimer of alpha, beta and gamma subunits. The cofactor is heme b.

It is found in the cytoplasm. May transfer electrons to the iron-sulfur centers of the beta subunit of chlorate reductase. This is Chlorate reductase subunit gamma from Stutzerimonas chloritidismutans (Pseudomonas chloritidismutans).